The sequence spans 509 residues: Oligo-1,6-glucosidase (509 aa).

Aspartate 198 functions as the Nucleophile in the catalytic mechanism. Residue glutamate 254 is the Proton donor of the active site.

This sequence belongs to the glycosyl hydrolase 13 family.

It is found in the cytoplasm. It carries out the reaction Hydrolysis of (1-&gt;6)-alpha-D-glucosidic linkages in some oligosaccharides produced from starch and glycogen by alpha-amylase, and in isomaltose.. The polypeptide is Oligo-1,6-glucosidase (malL) (Bacillus sp. (strain F5)).